The sequence spans 395 residues: Putative 8-amino-7-oxononanoate synthase (395 aa).

Arginine 23 serves as a coordination point for substrate. A pyridoxal 5'-phosphate-binding site is contributed by 110–111; that stretch reads GY. Histidine 135 is a substrate binding site. Residues serine 182, 207 to 210, and 239 to 242 contribute to the pyridoxal 5'-phosphate site; these read DEAH and TFSK. The residue at position 242 (lysine 242) is an N6-(pyridoxal phosphate)lysine. Threonine 356 contributes to the substrate binding site.

This sequence belongs to the class-II pyridoxal-phosphate-dependent aminotransferase family. BioF subfamily. In terms of assembly, homodimer. Pyridoxal 5'-phosphate is required as a cofactor.

It catalyses the reaction 6-carboxyhexanoyl-[ACP] + L-alanine + H(+) = (8S)-8-amino-7-oxononanoate + holo-[ACP] + CO2. It functions in the pathway cofactor biosynthesis; biotin biosynthesis. Functionally, catalyzes the decarboxylative condensation of pimeloyl-[acyl-carrier protein] and L-alanine to produce 8-amino-7-oxononanoate (AON), [acyl-carrier protein], and carbon dioxide. The polypeptide is Putative 8-amino-7-oxononanoate synthase (bioF) (Bacillus cereus (strain ZK / E33L)).